A 158-amino-acid polypeptide reads, in one-letter code: Transcription elongation factor GreA (158 aa).

Positions 46 to 66 (AEYEAAKERQGFIEGRISELE) form a coiled coil.

Belongs to the GreA/GreB family.

In terms of biological role, necessary for efficient RNA polymerase transcription elongation past template-encoded arresting sites. The arresting sites in DNA have the property of trapping a certain fraction of elongating RNA polymerases that pass through, resulting in locked ternary complexes. Cleavage of the nascent transcript by cleavage factors such as GreA or GreB allows the resumption of elongation from the new 3'terminus. GreA releases sequences of 2 to 3 nucleotides. The sequence is that of Transcription elongation factor GreA from Neisseria meningitidis serogroup B (strain ATCC BAA-335 / MC58).